The sequence spans 249 residues: Ditrans,polycis-undecaprenyl-diphosphate synthase ((2E,6E)-farnesyl-diphosphate specific) (249 aa).

Asp26 is an active-site residue. Position 26 (Asp26) interacts with Mg(2+). Substrate-binding positions include 27-30 (GNGR), Trp31, Arg39, His43, and 71-73 (SRE). Asn74 (proton acceptor) is an active-site residue. Substrate contacts are provided by residues Trp75, Arg77, Arg194, and 200 to 202 (RIS). Mg(2+) is bound at residue Glu213.

This sequence belongs to the UPP synthase family. Homodimer. Mg(2+) is required as a cofactor.

It carries out the reaction 8 isopentenyl diphosphate + (2E,6E)-farnesyl diphosphate = di-trans,octa-cis-undecaprenyl diphosphate + 8 diphosphate. Functionally, catalyzes the sequential condensation of isopentenyl diphosphate (IPP) with (2E,6E)-farnesyl diphosphate (E,E-FPP) to yield (2Z,6Z,10Z,14Z,18Z,22Z,26Z,30Z,34E,38E)-undecaprenyl diphosphate (di-trans,octa-cis-UPP). UPP is the precursor of glycosyl carrier lipid in the biosynthesis of bacterial cell wall polysaccharide components such as peptidoglycan and lipopolysaccharide. The protein is Ditrans,polycis-undecaprenyl-diphosphate synthase ((2E,6E)-farnesyl-diphosphate specific) of Buchnera aphidicola subsp. Schizaphis graminum (strain Sg).